An 88-amino-acid polypeptide reads, in one-letter code: Small ribosomal subunit protein bS16c (88 aa).

This sequence belongs to the bacterial ribosomal protein bS16 family.

It is found in the plastid. The protein resides in the chloroplast. This is Small ribosomal subunit protein bS16c from Atropa belladonna (Belladonna).